A 201-amino-acid polypeptide reads, in one-letter code: MIAFVSGTVAALAPDAAVIEVGGVGMAVQCTPNTLSTLRLGKPAKLATSLVVREDSLTLYGFADDDERQVFELLQTASGVGPRLAQAMLAVHQPDALRRAVATGDEKALTAVPGIGKKGAQKLLLELKDRLGEPIGAPAVGAPVSTGWRDQLHAALIGLGYATREADEAVSAVAPQAEAAGGTPQVGALLKAALQTLNRAR.

Residues 1–63 form a domain I region; the sequence is MIAFVSGTVA…EDSLTLYGFA (63 aa). The domain II stretch occupies residues 64-139; sequence DDDERQVFEL…RLGEPIGAPA (76 aa). Residues 139-143 are flexible linker; that stretch reads AVGAP. The domain III stretch occupies residues 144–201; the sequence is VSTGWRDQLHAALIGLGYATREADEAVSAVAPQAEAAGGTPQVGALLKAALQTLNRAR.

The protein belongs to the RuvA family. In terms of assembly, homotetramer. Forms an RuvA(8)-RuvB(12)-Holliday junction (HJ) complex. HJ DNA is sandwiched between 2 RuvA tetramers; dsDNA enters through RuvA and exits via RuvB. An RuvB hexamer assembles on each DNA strand where it exits the tetramer. Each RuvB hexamer is contacted by two RuvA subunits (via domain III) on 2 adjacent RuvB subunits; this complex drives branch migration. In the full resolvosome a probable DNA-RuvA(4)-RuvB(12)-RuvC(2) complex forms which resolves the HJ.

The protein resides in the cytoplasm. Functionally, the RuvA-RuvB-RuvC complex processes Holliday junction (HJ) DNA during genetic recombination and DNA repair, while the RuvA-RuvB complex plays an important role in the rescue of blocked DNA replication forks via replication fork reversal (RFR). RuvA specifically binds to HJ cruciform DNA, conferring on it an open structure. The RuvB hexamer acts as an ATP-dependent pump, pulling dsDNA into and through the RuvAB complex. HJ branch migration allows RuvC to scan DNA until it finds its consensus sequence, where it cleaves and resolves the cruciform DNA. The sequence is that of Holliday junction branch migration complex subunit RuvA from Streptomyces coelicolor (strain ATCC BAA-471 / A3(2) / M145).